The chain runs to 381 residues: MIRKIPSFIEVYKSLIQIPTISSNNKLLDQSNKNFIDLLSNYFSDLNFSVKNYQIPHTDKYNMLACVGSGNGGLLLSGHSDTVDFDEKKWTKDPFKLTETNNKFYGLGAVDMKGFFALILEVISSINIKKINKPIYILATANEETDMSGARNFIQSTIIKPDCIIIGEPTSLKLINAHKGHMSYSIKVIGDTGHSSNPDHGVNSIEIMHDVIRSLLILKKYFKEEYQHPNFSIPYPTMNLSSIHGGSAINRICPLCILNFEIRPIPGLTLTQIEIVIKEKLETIMKKWSHRIFIKKLFSSVPAYECPHNSGTIKIVEKLCQLNSAAVNYCTEAPFLQRIAPTLILGPGSIEQAHQPDEYLEHYFIQPTKNIITKLINKFCY.

Residue H79 participates in Zn(2+) binding. D81 is an active-site residue. D111 lines the Zn(2+) pocket. E143 is a catalytic residue. Zn(2+) is bound by residues E144, E168, and H354.

This sequence belongs to the peptidase M20A family. ArgE subfamily. As to quaternary structure, homodimer. It depends on Zn(2+) as a cofactor. Co(2+) is required as a cofactor. Glutathione serves as cofactor.

Its subcellular location is the cytoplasm. The enzyme catalyses N(2)-acetyl-L-ornithine + H2O = L-ornithine + acetate. The protein operates within amino-acid biosynthesis; L-arginine biosynthesis; L-ornithine from N(2)-acetyl-L-ornithine (linear): step 1/1. Functionally, catalyzes the hydrolysis of the amide bond of N(2)-acetylated L-amino acids. Cleaves the acetyl group from N-acetyl-L-ornithine to form L-ornithine, an intermediate in L-arginine biosynthesis pathway, and a branchpoint in the synthesis of polyamines. This Buchnera aphidicola subsp. Acyrthosiphon pisum (strain APS) (Acyrthosiphon pisum symbiotic bacterium) protein is Acetylornithine deacetylase.